Here is a 429-residue protein sequence, read N- to C-terminus: Adenylosuccinate synthetase (429 aa).

GTP is bound by residues 12-18 (GDEGKGK) and 40-42 (GHT). Asp-13 (proton acceptor) is an active-site residue. Positions 13 and 40 each coordinate Mg(2+). IMP contacts are provided by residues 13–16 (DEGK), 38–41 (NAGH), Thr-128, Arg-142, Gln-223, Thr-238, and Arg-302. The Proton donor role is filled by His-41. Position 298-304 (298-304 (TVTGRPR)) interacts with substrate. GTP-binding positions include Arg-304, 330–332 (LLD), and 412–414 (SVG).

It belongs to the adenylosuccinate synthetase family. Homodimer. Mg(2+) serves as cofactor.

The protein resides in the cytoplasm. The enzyme catalyses IMP + L-aspartate + GTP = N(6)-(1,2-dicarboxyethyl)-AMP + GDP + phosphate + 2 H(+). Its pathway is purine metabolism; AMP biosynthesis via de novo pathway; AMP from IMP: step 1/2. Its function is as follows. Plays an important role in the de novo pathway of purine nucleotide biosynthesis. Catalyzes the first committed step in the biosynthesis of AMP from IMP. The polypeptide is Adenylosuccinate synthetase (Lactobacillus acidophilus (strain ATCC 700396 / NCK56 / N2 / NCFM)).